Reading from the N-terminus, the 274-residue chain is MAAGSSHVSADARKLVGKVAVITGGASGIGACTARLFVKHGARVVVADIQDELGASLVAELGPDASSYVHCDVTNEGDVAAAVDHAVARFGKLDVMFNNAGVSGPPCFRMSECTKEDFERVLAVNLVGPFLGTKHAARVMAPARRGSIISTASLSSSVSGAASHAYTTSKHALVGFTENAAGELGRHGIRVNCVSPAGVATPLARAAMGMDDEAIEAIMANSANLKGAGALKADDIAAAALFLASDDGRYVSGQNLRVDGGLSVVNSSFGFFRD.

It belongs to the short-chain dehydrogenases/reductases (SDR) family.

It catalyses the reaction 3beta-hydroxy-9beta-pimara-7,15-dien-19,6beta-olide + NAD(+) = momilactone A + NADH + H(+). The catalysed reaction is 3beta-hydroxy-9beta-pimara-7,15-dien-19,6beta-olide + NADP(+) = momilactone A + NADPH + H(+). Involved in momilactone phytoalexins biosynthesis. Catalyzes the last step of momilactone A biosynthesis. The sequence is that of Momilactone A synthase from Oryza sativa subsp. japonica (Rice).